Here is a 282-residue protein sequence, read N- to C-terminus: uncharacterized protein (282 aa).

The region spanning Met1–Gln77 is the HTH rpiR-type domain. The H-T-H motif DNA-binding region spans Ser37–Gln56. Residues Cys125–Glu265 enclose the SIS domain.

This is an uncharacterized protein from Escherichia coli (strain K12).